Here is a 455-residue protein sequence, read N- to C-terminus: tRNA modification GTPase MnmE (455 aa).

Residues Arg24, Glu81, and Lys121 each contribute to the (6S)-5-formyl-5,6,7,8-tetrahydrofolate site. The TrmE-type G domain maps to 217–378; the sequence is GMKVVIAGRP…LREHLKDCMG (162 aa). Asn227 provides a ligand contact to K(+). GTP contacts are provided by residues 227 to 232, 246 to 252, 271 to 274, and 359 to 361; these read NAGKSS, TDIAGTT, DTAG, and SAR. Ser231 contacts Mg(2+). Residues Thr246, Ile248, and Thr251 each coordinate K(+). A Mg(2+)-binding site is contributed by Thr252. Lys455 is a (6S)-5-formyl-5,6,7,8-tetrahydrofolate binding site.

Belongs to the TRAFAC class TrmE-Era-EngA-EngB-Septin-like GTPase superfamily. TrmE GTPase family. Homodimer. Heterotetramer of two MnmE and two MnmG subunits. K(+) is required as a cofactor.

The protein resides in the cytoplasm. In terms of biological role, exhibits a very high intrinsic GTPase hydrolysis rate. Involved in the addition of a carboxymethylaminomethyl (cmnm) group at the wobble position (U34) of certain tRNAs, forming tRNA-cmnm(5)s(2)U34. The polypeptide is tRNA modification GTPase MnmE (Photobacterium profundum (strain SS9)).